The primary structure comprises 946 residues: DDB1- and CUL4-associated factor 5 (946 aa).

WD repeat units lie at residues glycine 51–valine 91, glutamate 99–phenylalanine 139, alanine 140–proline 180, asparagine 185–leucine 225, phenylalanine 277–glycine 317, and glycine 331–glycine 370. The segment at glycine 449–aspartate 478 is disordered. A compositionally biased stretch (polar residues) spans serine 454 to leucine 465. Threonine 500 is modified (phosphothreonine). Disordered stretches follow at residues leucine 527–valine 656, serine 675–threonine 860, and cysteine 894–threonine 946. 2 positions are modified to phosphoserine: serine 531 and serine 533. The segment covering serine 531–threonine 544 has biased composition (acidic residues). Low complexity predominate over residues proline 555 to serine 567. Residues alanine 579 to lysine 592 show a composition bias toward basic residues. Low complexity predominate over residues leucine 625–serine 638. Phosphoserine is present on residues serine 626, serine 628, and serine 645. A compositionally biased stretch (basic and acidic residues) spans glutamate 691–asparagine 701. 2 stretches are compositionally biased toward polar residues: residues glycine 760–glycine 769 and threonine 808–threonine 819.

Interacts with DDB1, CUL4A or CUL4B. Interacts with L3MBTL3. Interacts with SOX2. Interacts with DNMT1. Interacts with E2F1.

It functions in the pathway protein modification; protein ubiquitination. Is a substrate receptor for the CUL4-DDB1 E3 ubiquitin-protein ligase complex (CRL4), involved in the ubiquitination of a set of methylated non-histone proteins, including SOX2. The complex CRL4-DCAF5 is also involved in the ubiquitination of methylated DNMT1 and E2F1. The chain is DDB1- and CUL4-associated factor 5 (Dcaf5) from Mus musculus (Mouse).